A 467-amino-acid chain; its full sequence is Protein PHOSPHATE STARVATION RESPONSE 3 (467 aa).

Residues 227–266 (MSLPVSSCSDQEDLQDARSPAKVQLSSSRSSSGTASCNKP) are disordered. The 61-residue stretch at 262–322 (SCNKPRLRWT…HLQKYRLAKY (61 aa)) folds into the HTH myb-type domain. The H-T-H motif DNA-binding region spans 293–318 (PKGVLKLMKVEGLTIYHIKSHLQKYR). The span at 327 to 337 (KEDKKQEEKKT) shows a compositional bias: basic and acidic residues. Disordered regions lie at residues 327–353 (KEDK…KSAQ) and 400–467 (RESI…VHDE). The segment covering 402–412 (SISSMTSTTEG) has biased composition (polar residues). Composition is skewed to basic and acidic residues over residues 419 to 428 (PMEKTEDKAE) and 438 to 467 (RITD…VHDE).

Expressed in the root cap and in the exodermis of the root, in the root tip of lateral roots, in the mesophyll cells of the leaf, in pollen, vascular cylinder of the anther and the veins of the lemma, palea and pistils, and in the xylem and phloem regions of large vascular bundles, small vascular bundles and diffuse vascular bundles in node I.

The protein resides in the nucleus. In terms of biological role, transcription factor involved in phosphate starvation signaling. Binds to P1BS, an imperfect palindromic sequence 5'-GNATATNC-3', to promote the expression of inorganic phosphate (Pi) starvation-responsive genes. Functionally redundant with PHR1 and PHR2 in regulating Pi starvation response and Pi homeostasis. The sequence is that of Protein PHOSPHATE STARVATION RESPONSE 3 from Oryza sativa subsp. japonica (Rice).